Here is a 293-residue protein sequence, read N- to C-terminus: Pyridoxal 5'-phosphate synthase subunit PdxS (293 aa).

Asp23 serves as a coordination point for D-ribose 5-phosphate. Lys80 (schiff-base intermediate with D-ribose 5-phosphate) is an active-site residue. D-ribose 5-phosphate is bound at residue Gly152. Arg164 contacts D-glyceraldehyde 3-phosphate. D-ribose 5-phosphate is bound by residues Gly213 and Gly234–Ser235.

It belongs to the PdxS/SNZ family. In the presence of PdxT, forms a dodecamer of heterodimers.

It carries out the reaction aldehydo-D-ribose 5-phosphate + D-glyceraldehyde 3-phosphate + L-glutamine = pyridoxal 5'-phosphate + L-glutamate + phosphate + 3 H2O + H(+). It participates in cofactor biosynthesis; pyridoxal 5'-phosphate biosynthesis. Its function is as follows. Catalyzes the formation of pyridoxal 5'-phosphate from ribose 5-phosphate (RBP), glyceraldehyde 3-phosphate (G3P) and ammonia. The ammonia is provided by the PdxT subunit. Can also use ribulose 5-phosphate and dihydroxyacetone phosphate as substrates, resulting from enzyme-catalyzed isomerization of RBP and G3P, respectively. The sequence is that of Pyridoxal 5'-phosphate synthase subunit PdxS from Desulfovibrio desulfuricans (strain ATCC 27774 / DSM 6949 / MB).